Reading from the N-terminus, the 949-residue chain is RNA polymerase-associated protein RapA (949 aa).

Positions 164 to 332 constitute a Helicase ATP-binding domain; that stretch reads EVADRIAPRV…FARLRLLDPN (169 aa). Residue 177 to 184 coordinates ATP; the sequence is DEVGLGKT. The DEAH box motif lies at 278–281; sequence DEAH. In terms of domain architecture, Helicase C-terminal spans 474 to 628; it reads RVEWLIDTLK…TCPTGNALQH (155 aa).

It belongs to the SNF2/RAD54 helicase family. RapA subfamily. Interacts with the RNAP. Has a higher affinity for the core RNAP than for the holoenzyme. Its ATPase activity is stimulated by binding to RNAP.

In terms of biological role, transcription regulator that activates transcription by stimulating RNA polymerase (RNAP) recycling in case of stress conditions such as supercoiled DNA or high salt concentrations. Probably acts by releasing the RNAP, when it is trapped or immobilized on tightly supercoiled DNA. Does not activate transcription on linear DNA. Probably not involved in DNA repair. This chain is RNA polymerase-associated protein RapA, found in Stutzerimonas stutzeri (strain A1501) (Pseudomonas stutzeri).